A 118-amino-acid polypeptide reads, in one-letter code: Basic phospholipase A2 PA-5 (118 aa).

7 cysteine pairs are disulfide-bonded: cysteine 11–cysteine 71, cysteine 27–cysteine 117, cysteine 29–cysteine 45, cysteine 44–cysteine 98, cysteine 51–cysteine 91, cysteine 60–cysteine 84, and cysteine 78–cysteine 89. The Ca(2+) site is built by tyrosine 28, glycine 30, and glycine 32. Histidine 48 is an active-site residue. Position 49 (aspartate 49) interacts with Ca(2+). Aspartate 92 is an active-site residue.

This sequence belongs to the phospholipase A2 family. Group I subfamily. D49 sub-subfamily. It depends on Ca(2+) as a cofactor. Expressed by the venom gland.

Its subcellular location is the secreted. It carries out the reaction a 1,2-diacyl-sn-glycero-3-phosphocholine + H2O = a 1-acyl-sn-glycero-3-phosphocholine + a fatty acid + H(+). In terms of biological role, PLA2 catalyzes the calcium-dependent hydrolysis of the 2-acyl groups in 3-sn-phosphoglycerides. This chain is Basic phospholipase A2 PA-5, found in Pseudechis australis (Mulga snake).